We begin with the raw amino-acid sequence, 202 residues long: Ig delta chain C region (202 aa).

The disordered stretch occupies residues 32-58; that stretch reads KSKTFKLPETRNSQSSKKANPTPQAKN. The span at 41–56 shows a compositional bias: polar residues; that stretch reads TRNSQSSKKANPTPQA. Positions 66–178 constitute an Ig-like domain; sequence PTATKNIVGA…TKLNASKSLE (113 aa).

The polypeptide is Ig delta chain C region (Rattus norvegicus (Rat)).